Here is a 104-residue protein sequence, read N- to C-terminus: MEKYAFRMRLHPGKAAEYQARHDAIRPELVALLKDAGISDYSIHLDEENDLLFGVLWRSDDHKMADLPSHPVMRKWWAHMADIMETHADNEPVAAPLKTVFHLR.

Substrate is bound at residue Tyr18. His22 acts as the Proton donor in catalysis. Substrate contacts are provided by residues Tyr41 and 76–77; that span reads WW.

It belongs to the rhamnose mutarotase family. Homodimer.

It localises to the cytoplasm. The catalysed reaction is alpha-L-rhamnose = beta-L-rhamnose. The protein operates within carbohydrate metabolism; L-rhamnose metabolism. In terms of biological role, involved in the anomeric conversion of L-rhamnose. In Sinorhizobium medicae (strain WSM419) (Ensifer medicae), this protein is L-rhamnose mutarotase.